A 347-amino-acid polypeptide reads, in one-letter code: MKPPILIIIMSTVMSGTMIVLTSSHWLLIWIGFEMNMLAIIPILMKNHTPRATEASTKYFLTQATASMLLMMGIIINLMFSGEWSISKIPNPIASGLVTIALTMKLGMAPFHFWVPEVTQGISLSSGMILLTWQKIAPLSILYQISPSINPKLLITMAIASVLIGGWGGLNQTQLRKILAYSSIAHMGWMAVILTYNPTLMILNLTIYITMTLSTFMLFMHNSSTTTLSLSNTWNKLPLMTSLILVLMMSLGGLPPLSGFAPKWMIIQELTKNDMIILPTFMAITALLNLYFYMRLSYTTALTMFPSVNNMKMKWQFESAKKIILLPPLIIISTMLLPMTPMMSILE.

The next 11 helical transmembrane spans lie at 3-23 (PPIL…VLTS), 25-45 (HWLL…PILM), 60-80 (FLTQ…NLMF), 96-116 (GLVT…FWVP), 122-142 (ISLS…LSIL), 153-173 (LLIT…LNQT), 178-198 (ILAY…TYNP), 200-220 (LMIL…MLFM), 237-257 (LPLM…LPPL), 274-294 (DMII…YFYM), and 323-343 (IILL…TPMM).

Belongs to the complex I subunit 2 family. As to quaternary structure, core subunit of respiratory chain NADH dehydrogenase (Complex I) which is composed of 45 different subunits. Interacts with TMEM242.

The protein resides in the mitochondrion inner membrane. It catalyses the reaction a ubiquinone + NADH + 5 H(+)(in) = a ubiquinol + NAD(+) + 4 H(+)(out). In terms of biological role, core subunit of the mitochondrial membrane respiratory chain NADH dehydrogenase (Complex I) which catalyzes electron transfer from NADH through the respiratory chain, using ubiquinone as an electron acceptor. Essential for the catalytic activity and assembly of complex I. The chain is NADH-ubiquinone oxidoreductase chain 2 from Halichoerus grypus (Gray seal).